The chain runs to 532 residues: SET and MYND domain-containing protein DDB_G0288495 (532 aa).

Residues 25–448 enclose the SET domain; it reads PWIEVKSVSE…ENQELLITYI (424 aa). The MYND-type; degenerate zinc finger occupies 70–116; that stretch reads CTTCFKILLESNRHNFQTCPSCFQVNYCSNYCKQYSKIETKHTELEC. The stretch at 199-240 forms a coiled coil; sequence INSKNNNEFENEEEEEEEQEQKGEGEQEENENNENNEKVKKK. The segment at 204–234 is disordered; that stretch reads NNEFENEEEEEEEQEQKGEGEQEENENNENN. A compositionally biased stretch (acidic residues) spans 207-217; that stretch reads FENEEEEEEEQ.

The protein belongs to the class V-like SAM-binding methyltransferase superfamily.

Its function is as follows. Probable methyltransferase. The chain is SET and MYND domain-containing protein DDB_G0288495 from Dictyostelium discoideum (Social amoeba).